We begin with the raw amino-acid sequence, 341 residues long: S-adenosylmethionine:tRNA ribosyltransferase-isomerase (341 aa).

Belongs to the QueA family. In terms of assembly, monomer.

The protein resides in the cytoplasm. The enzyme catalyses 7-aminomethyl-7-carbaguanosine(34) in tRNA + S-adenosyl-L-methionine = epoxyqueuosine(34) in tRNA + adenine + L-methionine + 2 H(+). It functions in the pathway tRNA modification; tRNA-queuosine biosynthesis. In terms of biological role, transfers and isomerizes the ribose moiety from AdoMet to the 7-aminomethyl group of 7-deazaguanine (preQ1-tRNA) to give epoxyqueuosine (oQ-tRNA). The sequence is that of S-adenosylmethionine:tRNA ribosyltransferase-isomerase from Staphylococcus haemolyticus (strain JCSC1435).